We begin with the raw amino-acid sequence, 493 residues long: Probable cytosol aminopeptidase (493 aa).

Mn(2+) is bound by residues K257 and D262. K269 is a catalytic residue. Positions 281, 341, and 343 each coordinate Mn(2+). The active site involves R345.

It belongs to the peptidase M17 family. Mn(2+) is required as a cofactor.

It localises to the cytoplasm. The catalysed reaction is Release of an N-terminal amino acid, Xaa-|-Yaa-, in which Xaa is preferably Leu, but may be other amino acids including Pro although not Arg or Lys, and Yaa may be Pro. Amino acid amides and methyl esters are also readily hydrolyzed, but rates on arylamides are exceedingly low.. It carries out the reaction Release of an N-terminal amino acid, preferentially leucine, but not glutamic or aspartic acids.. In terms of biological role, presumably involved in the processing and regular turnover of intracellular proteins. Catalyzes the removal of unsubstituted N-terminal amino acids from various peptides. The polypeptide is Probable cytosol aminopeptidase (Prochlorococcus marinus (strain MIT 9211)).